Consider the following 238-residue polypeptide: Ribosomal RNA small subunit methyltransferase G (238 aa).

S-adenosyl-L-methionine contacts are provided by residues G79, F84, 102-104 (EAT), 130-131 (IE), and R149.

It belongs to the methyltransferase superfamily. RNA methyltransferase RsmG family.

The protein localises to the cytoplasm. Specifically methylates the N7 position of a guanine in 16S rRNA. This chain is Ribosomal RNA small subunit methyltransferase G, found in Chloroflexus aggregans (strain MD-66 / DSM 9485).